The primary structure comprises 72 residues: High-potential iron-sulfur protein isozyme 1 (72 aa).

Alanine 1 is modified (N-carbamoylalanine; partial). Residues cysteine 34, cysteine 37, cysteine 51, and cysteine 65 each contribute to the [4Fe-4S] cluster site.

The protein belongs to the high-potential iron-sulfur protein (HiPIP) family. Homodimer.

Specific class of high-redox-potential 4Fe-4S ferredoxins. Functions in anaerobic electron transport in most purple and in some other photosynthetic bacteria and in at least one genus (Paracoccus) of halophilic, denitrifying bacteria. This is High-potential iron-sulfur protein isozyme 1 from Ectothiorhodospira mobilis.